Here is a 282-residue protein sequence, read N- to C-terminus: uncharacterized protein (282 aa).

This sequence belongs to the glycosyltransferase 2 family. WaaE/KdtX subfamily.

This is an uncharacterized protein from Rickettsia conorii (strain ATCC VR-613 / Malish 7).